Reading from the N-terminus, the 338-residue chain is Fe-S cluster assembly protein DRE2 (338 aa).

Residues 1-165 (MAKSGLLLIH…LPSFKKAANK (165 aa)) are N-terminal SAM-like domain. Positions 166–232 (PLPTFKKKVE…DDLLNEEDAK (67 aa)) are linker. Positions 181 to 223 (VEARVHKAENDDDELEDEEDENLFDASRSKYFDEDDSESLDED) are disordered. Composition is skewed to acidic residues over residues 190-203 (NDDD…DENL) and 213-223 (DEDDSESLDED). Positions 242, 253, 256, and 258 each coordinate [2Fe-2S] cluster. A fe-S binding site A region spans residues 242–258 (CGKSKTKKKKACKDCSC). Residues C301, C304, C312, and C315 each coordinate [4Fe-4S] cluster. 2 short sequence motifs (cx2C motif) span residues 301–304 (CGSC) and 312–315 (CTGC). Residues 301 to 315 (CGSCSLGDAFRCTGC) are fe-S binding site B.

The protein belongs to the anamorsin family. Monomer. Interacts with TAH18. Interacts with MIA40. It depends on [2Fe-2S] cluster as a cofactor. [4Fe-4S] cluster serves as cofactor.

The protein resides in the cytoplasm. It is found in the mitochondrion intermembrane space. In terms of biological role, component of the cytosolic iron-sulfur (Fe-S) protein assembly (CIA) machinery required for the maturation of extramitochondrial Fe-S proteins. Part of an electron transfer chain functioning in an early step of cytosolic Fe-S biogenesis, facilitating the de novo assembly of a [4Fe-4S] cluster on the scaffold complex CFD1-NBP35. Electrons are transferred to DRE2 from NADPH via the FAD- and FMN-containing protein TAH18. TAH18-DRE2 are also required for the assembly of the diferric tyrosyl radical cofactor of ribonucleotide reductase (RNR), probably by providing electrons for reduction during radical cofactor maturation in the catalytic small subunit RNR2. In Candida glabrata (strain ATCC 2001 / BCRC 20586 / JCM 3761 / NBRC 0622 / NRRL Y-65 / CBS 138) (Yeast), this protein is Fe-S cluster assembly protein DRE2.